The chain runs to 493 residues: 3-octaprenyl-4-hydroxybenzoate carboxy-lyase (493 aa).

Asn172 lines the Mn(2+) pocket. Prenylated FMN contacts are provided by residues 175–177, 189–191, and 194–195; these read IYR, RWL, and RG. Glu238 is a binding site for Mn(2+). The Proton donor role is filled by Asp287.

The protein belongs to the UbiD family. In terms of assembly, homohexamer. Requires prenylated FMN as cofactor. Mn(2+) serves as cofactor.

Its subcellular location is the cell membrane. The catalysed reaction is a 4-hydroxy-3-(all-trans-polyprenyl)benzoate + H(+) = a 2-(all-trans-polyprenyl)phenol + CO2. Its pathway is cofactor biosynthesis; ubiquinone biosynthesis. Functionally, catalyzes the decarboxylation of 3-octaprenyl-4-hydroxy benzoate to 2-octaprenylphenol, an intermediate step in ubiquinone biosynthesis. The chain is 3-octaprenyl-4-hydroxybenzoate carboxy-lyase from Shewanella piezotolerans (strain WP3 / JCM 13877).